The sequence spans 78 residues: Small ribosomal subunit protein bS18 (78 aa).

Belongs to the bacterial ribosomal protein bS18 family. As to quaternary structure, part of the 30S ribosomal subunit. Forms a tight heterodimer with protein bS6.

Its function is as follows. Binds as a heterodimer with protein bS6 to the central domain of the 16S rRNA, where it helps stabilize the platform of the 30S subunit. The polypeptide is Small ribosomal subunit protein bS18 (Geobacillus sp. (strain WCH70)).